Consider the following 236-residue polypeptide: Ubiquinone biosynthesis O-methyltransferase (236 aa).

The S-adenosyl-L-methionine site is built by R39, G59, D80, and M124.

It belongs to the methyltransferase superfamily. UbiG/COQ3 family.

The enzyme catalyses a 3-demethylubiquinol + S-adenosyl-L-methionine = a ubiquinol + S-adenosyl-L-homocysteine + H(+). It carries out the reaction a 3-(all-trans-polyprenyl)benzene-1,2-diol + S-adenosyl-L-methionine = a 2-methoxy-6-(all-trans-polyprenyl)phenol + S-adenosyl-L-homocysteine + H(+). It functions in the pathway cofactor biosynthesis; ubiquinone biosynthesis. O-methyltransferase that catalyzes the 2 O-methylation steps in the ubiquinone biosynthetic pathway. The chain is Ubiquinone biosynthesis O-methyltransferase from Shewanella oneidensis (strain ATCC 700550 / JCM 31522 / CIP 106686 / LMG 19005 / NCIMB 14063 / MR-1).